A 275-amino-acid polypeptide reads, in one-letter code: Small ribosomal subunit protein uS2 (275 aa).

Residues 244-275 (REGAEASKKKATVKKKAAPRAASGESAEAAAE) are disordered. Basic residues predominate over residues 252-261 (KKATVKKKAA). Low complexity predominate over residues 262–275 (PRAASGESAEAAAE).

It belongs to the universal ribosomal protein uS2 family.

This chain is Small ribosomal subunit protein uS2, found in Thioalkalivibrio sulfidiphilus (strain HL-EbGR7).